Consider the following 429-residue polypeptide: UDP-N-acetylglucosamine 1-carboxyvinyltransferase (429 aa).

Residue 22 to 23 (KN) participates in phosphoenolpyruvate binding. A UDP-N-acetyl-alpha-D-glucosamine-binding site is contributed by Arg102. The active-site Proton donor is Cys126. Cys126 is subject to 2-(S-cysteinyl)pyruvic acid O-phosphothioketal. UDP-N-acetyl-alpha-D-glucosamine is bound by residues 131–135 (RPVDL), Asp316, and Ile338.

This sequence belongs to the EPSP synthase family. MurA subfamily.

Its subcellular location is the cytoplasm. The enzyme catalyses phosphoenolpyruvate + UDP-N-acetyl-alpha-D-glucosamine = UDP-N-acetyl-3-O-(1-carboxyvinyl)-alpha-D-glucosamine + phosphate. It participates in cell wall biogenesis; peptidoglycan biosynthesis. In terms of biological role, cell wall formation. Adds enolpyruvyl to UDP-N-acetylglucosamine. The polypeptide is UDP-N-acetylglucosamine 1-carboxyvinyltransferase (Rhodopseudomonas palustris (strain BisB18)).